A 277-amino-acid chain; its full sequence is Pantothenate synthetase (277 aa).

Position 28–35 (28–35) interacts with ATP; it reads MGALHSGH. His35 (proton donor) is an active-site residue. Gln59 contacts (R)-pantoate. Gln59 contacts beta-alanine. ATP-binding positions include 145-148, Val174, and 182-185; these read GEKD and LSSR.

The protein belongs to the pantothenate synthetase family. In terms of assembly, homodimer.

It localises to the cytoplasm. The enzyme catalyses (R)-pantoate + beta-alanine + ATP = (R)-pantothenate + AMP + diphosphate + H(+). It participates in cofactor biosynthesis; (R)-pantothenate biosynthesis; (R)-pantothenate from (R)-pantoate and beta-alanine: step 1/1. Catalyzes the condensation of pantoate with beta-alanine in an ATP-dependent reaction via a pantoyl-adenylate intermediate. The polypeptide is Pantothenate synthetase (Anaplasma marginale (strain St. Maries)).